We begin with the raw amino-acid sequence, 851 residues long: DNA mismatch repair protein MutS (851 aa).

Position 602-609 (602-609) interacts with ATP; sequence GPNMSGKS.

The protein belongs to the DNA mismatch repair MutS family.

Its function is as follows. This protein is involved in the repair of mismatches in DNA. It is possible that it carries out the mismatch recognition step. This protein has a weak ATPase activity. The protein is DNA mismatch repair protein MutS of Streptococcus pyogenes serotype M18 (strain MGAS8232).